A 93-amino-acid polypeptide reads, in one-letter code: Conotoxin F_Vc1 (93 aa).

An N-terminal signal peptide occupies residues 1 to 22 (MQRGAVLLGVVAFLALWPQAGA). Residues 23–33 (EPYNLNDPDVR) constitute a propeptide that is removed on maturation.

It belongs to the conotoxin F superfamily. Post-translationally, contains 4 disulfide bonds. Expressed by the venom duct.

Its subcellular location is the secreted. The polypeptide is Conotoxin F_Vc1 (Conus victoriae (Queen Victoria cone)).